We begin with the raw amino-acid sequence, 230 residues long: MNRLNIAVSCLATALLFGCEALHPPAPGDNPDYAPTYPVTPDPKELRKVSGAIYSSETALPLFETPRARHPGDILTVFLIEKTDAQKNATTTQRKNDTTKITNKLFLGRPISLGSGYSMDFDLDNQRQFNGEGRSIQNNKLAGSISVTVAKVLANGNMVVQGEKWVRINQGNEFVRLSGIVRPQDIKADNTITSDRIANARISYGGTGQINNTNAQGWLSRILWGPLFPT.

The first 18 residues, 1-18, serve as a signal peptide directing secretion; sequence MNRLNIAVSCLATALLFG. Cysteine 19 carries N-palmitoyl cysteine lipidation. Cysteine 19 is lipidated: S-diacylglycerol cysteine.

It belongs to the FlgH family. The basal body constitutes a major portion of the flagellar organelle and consists of four rings (L,P,S, and M) mounted on a central rod.

It localises to the cell outer membrane. The protein localises to the bacterial flagellum basal body. Its function is as follows. Assembles around the rod to form the L-ring and probably protects the motor/basal body from shearing forces during rotation. This chain is Flagellar L-ring protein, found in Legionella pneumophila (strain Paris).